Here is a 173-residue protein sequence, read N- to C-terminus: ATP synthase subunit b (173 aa).

A helical transmembrane segment spans residues 12–32; the sequence is LDVNPGLVVWTLITFLVVVLV.

Belongs to the ATPase B chain family. In terms of assembly, F-type ATPases have 2 components, F(1) - the catalytic core - and F(0) - the membrane proton channel. F(1) has five subunits: alpha(3), beta(3), gamma(1), delta(1), epsilon(1). F(0) has three main subunits: a(1), b(2) and c(10-14). The alpha and beta chains form an alternating ring which encloses part of the gamma chain. F(1) is attached to F(0) by a central stalk formed by the gamma and epsilon chains, while a peripheral stalk is formed by the delta and b chains.

The protein resides in the cell inner membrane. In terms of biological role, f(1)F(0) ATP synthase produces ATP from ADP in the presence of a proton or sodium gradient. F-type ATPases consist of two structural domains, F(1) containing the extramembraneous catalytic core and F(0) containing the membrane proton channel, linked together by a central stalk and a peripheral stalk. During catalysis, ATP synthesis in the catalytic domain of F(1) is coupled via a rotary mechanism of the central stalk subunits to proton translocation. Functionally, component of the F(0) channel, it forms part of the peripheral stalk, linking F(1) to F(0). The sequence is that of ATP synthase subunit b from Leptospira borgpetersenii serovar Hardjo-bovis (strain JB197).